A 218-amino-acid polypeptide reads, in one-letter code: NAD(P)H-quinone oxidoreductase subunit U, chloroplastic (218 aa).

The transit peptide at 1–53 directs the protein to the chloroplast; it reads MASLSTITQPSLVHIPGESVLHHVPSTCSFPWKPTINTKRIICSPARNSSEVS. The tract at residues 47–72 is disordered; sequence RNSSEVSAEAETEGGSSTAVDEAPKE. Residues 95-159 enclose the J domain; sequence DHYGRLGIFR…EERRMYDWSL (65 aa). The helical transmembrane segment at 197-217 threads the bilayer; sequence ILGYFIGAWLVLGVALSVAFN.

Part of the chloroplast NDH complex, composed of a mixture of chloroplast and nucleus encoded subunits. Component of the electron donor-binding subcomplex, at least composed of NDHS, NDHT and NDHU.

Its subcellular location is the plastid. It localises to the chloroplast thylakoid membrane. The enzyme catalyses a plastoquinone + NADH + (n+1) H(+)(in) = a plastoquinol + NAD(+) + n H(+)(out). The catalysed reaction is a plastoquinone + NADPH + (n+1) H(+)(in) = a plastoquinol + NADP(+) + n H(+)(out). NDH shuttles electrons from NAD(P)H:plastoquinone, via FMN and iron-sulfur (Fe-S) centers, to quinones in the photosynthetic chain and possibly in a chloroplast respiratory chain. The immediate electron acceptor for the enzyme in this species is believed to be plastoquinone. Couples the redox reaction to proton translocation, and thus conserves the redox energy in a proton gradient. This Arabidopsis thaliana (Mouse-ear cress) protein is NAD(P)H-quinone oxidoreductase subunit U, chloroplastic.